A 126-amino-acid polypeptide reads, in one-letter code: Large ribosomal subunit protein bL17c (126 aa).

Residues 1 to 10 (MIDNGGRFFA) constitute a chloroplast transit peptide.

As to quaternary structure, component of the chloroplast large ribosomal subunit (LSU). Mature 70S chloroplast ribosomes of higher plants consist of a small (30S) and a large (50S) subunit. The 30S small subunit contains 1 molecule of ribosomal RNA (16S rRNA) and 24 different proteins. The 50S large subunit contains 3 rRNA molecules (23S, 5S and 4.5S rRNA) and 33 different proteins.

It localises to the plastid. It is found in the chloroplast. Its function is as follows. Component of the chloroplast ribosome (chloro-ribosome), a dedicated translation machinery responsible for the synthesis of chloroplast genome-encoded proteins, including proteins of the transcription and translation machinery and components of the photosynthetic apparatus. The polypeptide is Large ribosomal subunit protein bL17c (RPL17) (Spinacia oleracea (Spinach)).